We begin with the raw amino-acid sequence, 790 residues long: Protein sel-1 homolog 1 (790 aa).

An N-terminal signal peptide occupies residues 1–21 (MQVRVRLSLLLLCAVLLGSAA). The tract at residues 22–51 (ATSDDKTNQDDSLDSKSSLPTDESVKDHTT) is disordered. The Lumenal segment spans residues 22 to 734 (ATSDDKTNQD…LFTQLDMDQL (713 aa)). Positions 23–733 (TSDDKTNQDD…DLFTQLDMDQ (711 aa)) are interaction with ERLEC1, OS9 and SYVN1. Serine 64 is subject to Phosphoserine. Acidic residues predominate over residues 67 to 78 (AEVESLLQDEED). Positions 67 to 98 (AEVESLLQDEEDSSKTQEEEISFLESPNPSSK) are disordered. The Fibronectin type-II domain maps to 118–166 (AHGEPCHFPFLFLDKEYDECTSDGREDGRLWCATTYDYKTDEKWGFCET). Intrachain disulfides connect cysteine 123–cysteine 149 and cysteine 137–cysteine 164. 9 Sel1-like repeats span residues 179 to 214 (AEMIYQAGMKILNGSNRKSQKREAYRYLQKAAGMNH), 215 to 250 (TKALERVSYALLFGDYLTQNIQAAKEMFEKLTEEGS), 251 to 286 (PKGQTGLGFLYASGLGVNSSQAKALVYYTFGALGGN), 287 to 322 (LIAHMILGYRYWAGIGVLQSCESALTHYRLVANHVA), 369 to 405 (VQAQVGLGQLHLHGGRGVEQNHQRAFDYFNLAANAGN), 406 to 442 (SHAMAFLGKMYSEGSDIVPQSNETALHYFKKAADMGN), 443 to 478 (PVGQSGLGMAYLYGRGVQVNYDLALKYFQKAAEQGW), 479 to 514 (VDGQLQLGSMYYNGIGVKRDYKQALKYFNLASQGGH), and 515 to 550 (ILAFYNLAQMHASGTGVMRSCHTAVELFKNVCERGR). Asparagine 191 and asparagine 213 each carry an N-linked (GlcNAc...) asparagine glycan. Asparagine 268 carries an N-linked (GlcNAc...) asparagine glycan. The interval 348 to 533 (NSGMLEEDLI…MHASGTGVMR (186 aa)) is important for homodimerization and oligomerization. An N-linked (GlcNAc...) asparagine glycan is attached at asparagine 427. A glycan (N-linked (GlcNAc...) asparagine) is linked at asparagine 604. 2 Sel1-like repeats span residues 623 to 658 (TVARIKLGDYHFYGFGTDVDYETAFIHYRLASEQQH) and 660 to 695 (AQAMFNLGYMHEKGLGIKQDIHLAKRFYDMAAEASP). The interaction with SYVN1 stretch occupies residues 639–719 (TDVDYETAFI…VVYFLQYIRE (81 aa)). Residues 734–790 (LLGPEWDLYLMTIIALLLGTVIAYRQRQHQDIPVPRPPGPRPAPPQQEGPPEQQPPQ) are mediates retention in the endoplasmic reticulum. A helical membrane pass occupies residues 735–755 (LGPEWDLYLMTIIALLLGTVI). The Cytoplasmic segment spans residues 756-790 (AYRQRQHQDIPVPRPPGPRPAPPQQEGPPEQQPPQ). The segment at 763 to 790 (QDIPVPRPPGPRPAPPQQEGPPEQQPPQ) is disordered. Pro residues predominate over residues 767-790 (VPRPPGPRPAPPQQEGPPEQQPPQ).

Belongs to the sel-1 family. In terms of assembly, homodimer and homooligomer. May form a complex with ERLEC1, HSPA5, OS9, and SYVN1. Interacts with FOXRED2 and EDEM1. Interacts with LPL and LMF1; may stabilize the complex formed by LPL and LMF1 and thereby promote the export of LPL dimers. Component of the HRD1 complex, which comprises at least SYNV1/HRD1, DERL1/2, FAM8A1, HERPUD1/HERP, OS9, SEL1L and UBE2J1. SYNV1 assembles with SEL1L and FAM8A1 through its transmembrane domains, but interaction with its cytoplasmic domain is required to confer stability to FAM8A1 and enhance recruitment of HERPUD1. The interaction with SYNV1/HRD1 is direct. Post-translationally, N-glycosylated. In terms of tissue distribution, highly expressed in pancreas, white adipose tissue, liver and spleen (at protein level). Detected in heart, brain, spleen, lung, liver, kidney and testis.

It is found in the endoplasmic reticulum membrane. In terms of biological role, plays a role in the endoplasmic reticulum quality control (ERQC) system also called ER-associated degradation (ERAD) involved in ubiquitin-dependent degradation of misfolded endoplasmic reticulum proteins. Enhances SYVN1 stability. Plays a role in LPL maturation and secretion. Required for normal differentiation of the pancreas epithelium, and for normal exocrine function and survival of pancreatic cells. May play a role in Notch signaling. The polypeptide is Protein sel-1 homolog 1 (Sel1l) (Mus musculus (Mouse)).